Reading from the N-terminus, the 156-residue chain is Cell division protein SepF (156 aa).

Residues 15–58 form a disordered region; sequence SDVVPEDEDDEVIDEEPESSFDTDRSVTPIPAASTQPSTSQRKS. Positions 18–35 are enriched in acidic residues; that stretch reads VPEDEDDEVIDEEPESSF. Residues 47–57 are compositionally biased toward polar residues; sequence ASTQPSTSQRK.

This sequence belongs to the SepF family. In terms of assembly, homodimer. Interacts with FtsZ.

It localises to the cytoplasm. Cell division protein that is part of the divisome complex and is recruited early to the Z-ring. Probably stimulates Z-ring formation, perhaps through the cross-linking of FtsZ protofilaments. Its function overlaps with FtsA. The polypeptide is Cell division protein SepF (Bifidobacterium animalis subsp. lactis (strain AD011)).